The chain runs to 200 residues: NADH-quinone oxidoreductase subunit C (200 aa).

Belongs to the complex I 30 kDa subunit family. NDH-1 is composed of 14 different subunits. Subunits NuoB, C, D, E, F, and G constitute the peripheral sector of the complex.

It is found in the cell inner membrane. The enzyme catalyses a quinone + NADH + 5 H(+)(in) = a quinol + NAD(+) + 4 H(+)(out). NDH-1 shuttles electrons from NADH, via FMN and iron-sulfur (Fe-S) centers, to quinones in the respiratory chain. The immediate electron acceptor for the enzyme in this species is believed to be ubiquinone. Couples the redox reaction to proton translocation (for every two electrons transferred, four hydrogen ions are translocated across the cytoplasmic membrane), and thus conserves the redox energy in a proton gradient. The sequence is that of NADH-quinone oxidoreductase subunit C from Chelativorans sp. (strain BNC1).